The chain runs to 149 residues: Nucleoside diphosphate kinase (149 aa).

Lysine 9, phenylalanine 57, arginine 85, threonine 91, arginine 102, and asparagine 112 together coordinate ATP. The active-site Pros-phosphohistidine intermediate is histidine 115.

Belongs to the NDK family. As to quaternary structure, homotetramer. It depends on Mg(2+) as a cofactor.

Its subcellular location is the cytoplasm. It catalyses the reaction a 2'-deoxyribonucleoside 5'-diphosphate + ATP = a 2'-deoxyribonucleoside 5'-triphosphate + ADP. The enzyme catalyses a ribonucleoside 5'-diphosphate + ATP = a ribonucleoside 5'-triphosphate + ADP. Major role in the synthesis of nucleoside triphosphates other than ATP. The ATP gamma phosphate is transferred to the NDP beta phosphate via a ping-pong mechanism, using a phosphorylated active-site intermediate. This Desulforamulus reducens (strain ATCC BAA-1160 / DSM 100696 / MI-1) (Desulfotomaculum reducens) protein is Nucleoside diphosphate kinase.